A 76-amino-acid chain; its full sequence is Exodeoxyribonuclease 7 small subunit (76 aa).

Belongs to the XseB family. In terms of assembly, heterooligomer composed of large and small subunits.

Its subcellular location is the cytoplasm. The enzyme catalyses Exonucleolytic cleavage in either 5'- to 3'- or 3'- to 5'-direction to yield nucleoside 5'-phosphates.. Functionally, bidirectionally degrades single-stranded DNA into large acid-insoluble oligonucleotides, which are then degraded further into small acid-soluble oligonucleotides. The sequence is that of Exodeoxyribonuclease 7 small subunit from Bacillus mycoides (strain KBAB4) (Bacillus weihenstephanensis).